A 450-amino-acid polypeptide reads, in one-letter code: Ig mu chain C region (450 aa).

The protein is Ig mu chain C region of Canis lupus familiaris (Dog).